The primary structure comprises 246 residues: 14-3-3 protein beta/alpha (246 aa).

Met-1 is modified (N-acetylmethionine). Thr-2 bears the N-acetylthreonine; in 14-3-3 protein beta/alpha, N-terminally processed mark. Residue Thr-2 is modified to Phosphothreonine. Lys-5 carries the post-translational modification N6-acetyllysine. Residue Lys-51 is modified to N6-acetyllysine; alternate. Residue Lys-51 forms a Glycyl lysine isopeptide (Lys-Gly) (interchain with G-Cter in SUMO2); alternate linkage. The residue at position 60 (Ser-60) is a Phosphoserine. Position 70 is an N6-acetyllysine (Lys-70). 2 positions are modified to 3'-nitrotyrosine: Tyr-84 and Tyr-106. Position 117 is an N6-acetyllysine (Lys-117). A phosphoserine mark is found at Ser-186 and Ser-232.

It belongs to the 14-3-3 family. In terms of assembly, homodimer. Interacts with SAMSN1 and PRKCE. Interacts with AKAP13. Interacts with SSH1 and TORC2/CRTC2. Interacts with ABL1; the interaction results in cytoplasmic location of ABL1 and inhibition of cABL-mediated apoptosis. Interacts with ROR2 (dimer); the interaction results in phosphorylation of YWHAB on tyrosine residues. Interacts with GAB2. Interacts with YAP1 (phosphorylated form). Interacts with the phosphorylated (by AKT1) form of SRPK2. Interacts with PKA-phosphorylated AANAT. Interacts with MYO1C. Interacts with SIRT2. Interacts with the 'Thr-369' phosphorylated form of DAPK2. Interacts with PI4KB, TBC1D22A and TBC1D22B. Interacts with the 'Ser-1134' and 'Ser-1161' phosphorylated form of SOS1. Interacts (via phosphorylated form) with YWHAB; this interaction occurs in a protein kinase AKT1-dependent manner. Interacts with SLITRK1. Interacts with SYNPO2 (phosphorylated form); YWHAB competes with ACTN2 for interaction with SYNPO2. Interacts with RIPOR2 (via phosphorylated form); this interaction occurs in a chemokine-dependent manner and does not compete for binding of RIPOR2 with RHOA nor blocks inhibition of RIPOR2-mediated RHOA activity. Interacts with MARK2 and MARK3. Interacts with TESK1; the interaction is dependent on the phosphorylation of TESK1 'Ser-439' and inhibits TESK1 kinase activity. Interacts with MEFV. Interacts with HDAC4. Interacts with ADAM22 (via C-terminus). The alpha, brain-specific form differs from the beta form in being phosphorylated. Phosphorylated on Ser-60 by protein kinase C delta type catalytic subunit in a sphingosine-dependent fashion.

The protein localises to the cytoplasm. It is found in the melanosome. In terms of biological role, adapter protein implicated in the regulation of a large spectrum of both general and specialized signaling pathways. Binds to a large number of partners, usually by recognition of a phosphoserine or phosphothreonine motif. Binding generally results in the modulation of the activity of the binding partner. Negative regulator of osteogenesis. Blocks the nuclear translocation of the phosphorylated form (by AKT1) of SRPK2 and antagonizes its stimulatory effect on cyclin D1 expression resulting in blockage of neuronal apoptosis elicited by SRPK2. Negative regulator of signaling cascades that mediate activation of MAP kinases via AKAP13. This Bos taurus (Bovine) protein is 14-3-3 protein beta/alpha (YWHAB).